The sequence spans 542 residues: CTP synthase (542 aa).

The amidoligase domain stretch occupies residues 1–265 (MTRYIFITGG…DDEVLSVFGI (265 aa)). S13 serves as a coordination point for CTP. Position 13 (S13) interacts with UTP. ATP is bound by residues 14-19 (SLGKGL) and D71. Mg(2+) is bound by residues D71 and E139. Residues 146 to 148 (DIE), 186 to 191 (KTKPTQ), and K222 each bind CTP. Residues 186-191 (KTKPTQ) and K222 contribute to the UTP site. In terms of domain architecture, Glutamine amidotransferase type-1 spans 291–541 (TIAIVGKYTG…VEAAVEQSRL (251 aa)). G353 serves as a coordination point for L-glutamine. The active-site Nucleophile; for glutamine hydrolysis is the C380. L-glutamine-binding positions include 381-384 (FGMQ), E404, and R469. Active-site residues include H514 and E516.

This sequence belongs to the CTP synthase family. As to quaternary structure, homotetramer.

It carries out the reaction UTP + L-glutamine + ATP + H2O = CTP + L-glutamate + ADP + phosphate + 2 H(+). The enzyme catalyses L-glutamine + H2O = L-glutamate + NH4(+). The catalysed reaction is UTP + NH4(+) + ATP = CTP + ADP + phosphate + 2 H(+). It functions in the pathway pyrimidine metabolism; CTP biosynthesis via de novo pathway; CTP from UDP: step 2/2. With respect to regulation, allosterically activated by GTP, when glutamine is the substrate; GTP has no effect on the reaction when ammonia is the substrate. The allosteric effector GTP functions by stabilizing the protein conformation that binds the tetrahedral intermediate(s) formed during glutamine hydrolysis. Inhibited by the product CTP, via allosteric rather than competitive inhibition. Its function is as follows. Catalyzes the ATP-dependent amination of UTP to CTP with either L-glutamine or ammonia as the source of nitrogen. Regulates intracellular CTP levels through interactions with the four ribonucleotide triphosphates. This Parvibaculum lavamentivorans (strain DS-1 / DSM 13023 / NCIMB 13966) protein is CTP synthase.